Here is an 89-residue protein sequence, read N- to C-terminus: MALTKDSKKAIVEKFARFAGDTGSPEVQVAILTHEINELNEHLQTHIHDFHSKRGLFMKIGRRRNLLKYLREQDAQRYAALINELGLRR.

Belongs to the universal ribosomal protein uS15 family. In terms of assembly, part of the 30S ribosomal subunit. Forms a bridge to the 50S subunit in the 70S ribosome, contacting the 23S rRNA.

Functionally, one of the primary rRNA binding proteins, it binds directly to 16S rRNA where it helps nucleate assembly of the platform of the 30S subunit by binding and bridging several RNA helices of the 16S rRNA. In terms of biological role, forms an intersubunit bridge (bridge B4) with the 23S rRNA of the 50S subunit in the ribosome. This chain is Small ribosomal subunit protein uS15, found in Acholeplasma laidlawii (strain PG-8A).